The chain runs to 481 residues: RAC-beta serine/threonine-protein kinase (481 aa).

Met1 is subject to N-acetylmethionine. Positions 5–108 (SVIKEGWLHK…WMRAIQMVAN (104 aa)) constitute a PH domain. Ser34 bears the Phosphoserine mark. Cys60 and Cys77 form a disulfide bridge. The residue at position 126 (Ser126) is a Phosphoserine. O-linked (GlcNAc) serine glycans are attached at residues Ser128 and Ser131. One can recognise a Protein kinase domain in the interval 152-409 (FDYLKLLGKG…AKEVMEHRFF (258 aa)). Residues 158-166 (LGKGTFGKV) and Lys181 contribute to the ATP site. The Proton acceptor role is filled by Asp275. Residues Asn280 and Asp293 each coordinate Mn(2+). Cys297 and Cys311 are disulfide-bonded. Thr306 is a glycosylation site (O-linked (GlcNAc) threonine). The residue at position 309 (Thr309) is a Phosphothreonine; by PDPK1. Thr313 carries an O-linked (GlcNAc) threonine glycan. The AGC-kinase C-terminal domain occupies 410-481 (LSINWQDVVQ…QFSYSASIRE (72 aa)). Ser447 is modified (phosphoserine). A Phosphothreonine modification is found at Thr451. Ser474 and Ser478 each carry phosphoserine. A glycan (O-linked (GlcNAc) serine; alternate) is linked at Ser474.

Belongs to the protein kinase superfamily. AGC Ser/Thr protein kinase family. RAC subfamily. Interacts with BTBD10. Interacts with KCTD20. Interacts (via PH domain) with MTCP1, TCL1A and TCL1B; this interaction may facilitate AKT2 oligomerization and phosphorylation, hence increasing kinase activity. Interacts with PHB2; this interaction may be important for myogenic differentiation. Interacts (when phosphorylated) with CLIP3/ClipR-59; this interaction promotes AKT2 recruitment to the plasma membrane. Interacts with WDFY2/ProF (via WD repeats 1-3). Post-translationally, phosphorylation on Thr-309 and Ser-474 is required for full activity. Phosphorylation of the activation loop at Thr-309 by PDPK1/PDK1 is a prerequisite for full activation. Phosphorylated and activated by PDPK1/PDK1 in the presence of phosphatidylinositol 3,4,5-trisphosphate. Phosphorylation by mTORC2 in response to growth factors plays a key role in AKT1 activation: mTORC2 phosphorylates different sites depending on the context, such as Ser-474 or Ser-478, thereby facilitating subsequent phosphorylation of the activation loop by PDPK1/PDK1. Ubiquitinated; undergoes both 'Lys-48'- and 'Lys-63'-linked polyubiquitination. TRAF6 catalyzes 'Lys-63'-linked AKT2 ubiquitination; this modification may be important for AKT2 recruitment to the plasma membrane and for AKT2 activating phosphorylation. When phosphorylated, undergoes 'Lys-48'-polyubiquitination catalyzed by TTC3 in the nucleus, leading to its degradation by the proteasome. In terms of processing, O-GlcNAcylation at Thr-306 and Thr-313 inhibits activating phosphorylation at Thr-309 via the disruption of the interaction between AKT and PDPK1/PDK1. Widely expressed. Expressed in myoblasts.

Its subcellular location is the cytoplasm. It is found in the nucleus. It localises to the cell membrane. The protein localises to the early endosome. The catalysed reaction is L-seryl-[protein] + ATP = O-phospho-L-seryl-[protein] + ADP + H(+). The enzyme catalyses L-threonyl-[protein] + ATP = O-phospho-L-threonyl-[protein] + ADP + H(+). With respect to regulation, phosphorylation at Thr-309 (in the kinase domain) and Ser-474 (in the C-terminal regulatory region) is required for full activation. In adipocytes and hepatocytes, the activation is induced by insulin. Aminofurazans, such as 4-[2-(4-amino-2,5-dihydro-1,2,5-oxadiazol-3-yl)-6-{[(1S)-3-amino-1-phenylpropyl]oxy}-1-ethyl-1H-imidazo[4,5-c]pyridin-4-yl]-2-methylbut-3-yn-2-ol (compound 32), are potent AKT2 inhibitors. AKT2 phosphorylation of PKP1 is induced by insulin. In terms of biological role, serine/threonine kinase closely related to AKT1 and AKT3. All 3 enzymes, AKT1, AKT2 and AKT3, are collectively known as AKT kinase. AKT regulates many processes including metabolism, proliferation, cell survival, growth and angiogenesis, through the phosphorylation of a range of downstream substrates. Over 100 substrates have been reported so far, although for most of them, the precise AKT kinase catalyzing the reaction was not specified. AKT regulates glucose uptake by mediating insulin-induced translocation of the SLC2A4/GLUT4 glucose transporter to the cell surface. Phosphorylation of PTPN1 at 'Ser-50' negatively modulates its phosphatase activity preventing dephosphorylation of the insulin receptor and the attenuation of insulin signaling. Phosphorylation of TBC1D4 triggers the binding of this effector to inhibitory 14-3-3 proteins, which is required for insulin-stimulated glucose transport. AKT also regulates the storage of glucose in the form of glycogen by phosphorylating GSK3A at 'Ser-21' and GSK3B at 'Ser-9', resulting in inhibition of its kinase activity. Phosphorylation of GSK3 isoforms by AKT is also thought to be one mechanism by which cell proliferation is driven. AKT also regulates cell survival via the phosphorylation of MAP3K5 (apoptosis signal-related kinase). Phosphorylation of 'Ser-83' decreases MAP3K5 kinase activity stimulated by oxidative stress and thereby prevents apoptosis. AKT mediates insulin-stimulated protein synthesis by phosphorylating TSC2 at 'Ser-939' and 'Thr-1462', thereby activating mTORC1 signaling and leading to both phosphorylation of 4E-BP1 and in activation of RPS6KB1. AKT is involved in the phosphorylation of members of the FOXO factors (Forkhead family of transcription factors), leading to binding of 14-3-3 proteins and cytoplasmic localization. In particular, FOXO1 is phosphorylated at 'Thr-24', 'Ser-256' and 'Ser-319'. FOXO3 and FOXO4 are phosphorylated on equivalent sites. AKT has an important role in the regulation of NF-kappa-B-dependent gene transcription and positively regulates the activity of CREB1 (cyclic AMP (cAMP)-response element binding protein). The phosphorylation of CREB1 induces the binding of accessory proteins that are necessary for the transcription of pro-survival genes such as BCL2 and MCL1. AKT phosphorylates 'Ser-454' on ATP citrate lyase (ACLY), thereby potentially regulating ACLY activity and fatty acid synthesis. Activates the 3B isoform of cyclic nucleotide phosphodiesterase (PDE3B) via phosphorylation of 'Ser-273', resulting in reduced cyclic AMP levels and inhibition of lipolysis. Phosphorylates PIKFYVE on 'Ser-318', which results in increased PI(3)P-5 activity. The Rho GTPase-activating protein DLC1 is another substrate and its phosphorylation is implicated in the regulation cell proliferation and cell growth. AKT plays a role as key modulator of the AKT-mTOR signaling pathway controlling the tempo of the process of newborn neurons integration during adult neurogenesis, including correct neuron positioning, dendritic development and synapse formation. Signals downstream of phosphatidylinositol 3-kinase (PI(3)K) to mediate the effects of various growth factors such as platelet-derived growth factor (PDGF), epidermal growth factor (EGF), insulin and insulin-like growth factor 1 (IGF1). AKT mediates the antiapoptotic effects of IGF1. Essential for the SPATA13-mediated regulation of cell migration and adhesion assembly and disassembly. May be involved in the regulation of the placental development. In response to lysophosphatidic acid stimulation, inhibits the ciliogenesis cascade. In this context, phosphorylates WDR44, hence stabilizing its interaction with Rab11 and preventing the formation of the ciliogenic Rab11-FIP3-RAB3IP complex. Also phosphorylates RAB3IP/Rabin8, thus may affect RAB3IP guanine nucleotide exchange factor (GEF) activity toward Rab8, which is important for cilia growth. Phosphorylates PKP1, facilitating its interaction with YWHAG and translocation to the nucleus, ultimately resulting in a reduction in keratinocyte intercellular adhesion. Phosphorylation of PKP1 increases PKP1 protein stability, translocation to the cytoplasm away from desmosome plaques and PKP1-driven cap-dependent translation. Several AKT2-specific substrates have been identified, including ANKRD2, C2CD5, CLK2 and PITX2. May play a role in myoblast differentiation. In this context, may act through PITX2 phosphorylation. Unphosphorylated PITX2 associates with an ELAVL1/HuR-containing complex, which stabilizes CCND1 cyclin mRNA, ensuring cell proliferation. Phosphorylation by AKT2 impairs this association, leading to CCND1 mRNA destabilization and progression towards differentiation. Also involved in the negative regulation of myogenesis in response to stress conditions. In this context, acts by phosphorylating ANKRD2. May also be a key regulator of glucose uptake. Regulates insulin-stimulated glucose transport by the increase of glucose transporter GLUT4 translocation from intracellular stores to the plasma membrane. In this context, acts by phosphorylating C2CD5/CDP138 on 'Ser-197' in insulin-stimulated adipocytes. Through the phosphorylation of CLK2 on 'Thr-343', involved in insulin-regulated suppression of hepatic gluconeogenesis. The protein is RAC-beta serine/threonine-protein kinase of Homo sapiens (Human).